The sequence spans 484 residues: MAIPVESFFLAPGGQGSLQHRLRQMVTEGILSGRFRPGDRMPSTRALAAHLGVARITVTLAYADLVASDYLLARGRSGTFVSAAAPDARKARPLPRDGARTDWARLLHPRAQGLPRPDRPRDWSLYRYPFIYGQADPELFDHQNWRACALQALGRREFHRLSADCYDEDDPLLVEYILRHILPRRGIAAVPSEVLITMGAQNGLWLAAQVLLGPGERAAMENPGYPGTRAVLGTTGAEVLSVDVDDRGLVPAQLPARLKLVVTTASHHCPTNATLPVERRLALLAAAEAGDFLILEDDYEFEMSFLQSAAPSLKSLDAGGRVVHVGSFSKSLFPGLRLGYLVAPAPFVAAVRALRATVLRHPPGQLQRTLALFLSLGHYDALVARMKAAYRLRREVMTKAIEDNGLQIAGQGGFGGSSFWMQAPGAVDTEDLALRLRAEGVLIEPGRVFFDPARERRNFYRLAYSSIGPAAIPEGIARIARALR.

An HTH gntR-type domain is found at 16 to 84 (GSLQHRLRQM…GRSGTFVSAA (69 aa)). Residues 44–63 (TRALAAHLGVARITVTLAYA) constitute a DNA-binding region (H-T-H motif). Position 330 is an N6-(pyridoxal phosphate)lysine (Lys330).

This sequence in the C-terminal section; belongs to the class-I pyridoxal-phosphate-dependent aminotransferase family. It depends on pyridoxal 5'-phosphate as a cofactor.

In terms of biological role, transcriptional activator, which is essential for taurine-dependent expression of the tpa-tauR-xsc operon. Acts by binding to direct repeats in the promoter region. The chain is HTH-type transcriptional regulator TauR from Rhodobacter capsulatus (strain ATCC BAA-309 / NBRC 16581 / SB1003).